Consider the following 495-residue polypeptide: Thioredoxin reductase SEP1 (495 aa).

D37–C54 is a binding site for FAD. A disulfide bridge links C54 with C59. H468 serves as the catalytic Proton acceptor. Residues C493–U494 constitute a cross-link (cysteinyl-selenocysteine (Cys-Sec)). U494 is a non-standard amino acid (selenocysteine).

Belongs to the class-I pyridine nucleotide-disulfide oxidoreductase family. In terms of assembly, homodimer. FAD serves as cofactor. In terms of processing, the N-terminus is blocked.

The enzyme catalyses [thioredoxin]-dithiol + NADP(+) = [thioredoxin]-disulfide + NADPH + H(+). Its activity is regulated as follows. Activity was very low in selenium-depleted cells, but increased 4-fold to the same level as in selenium-sufficient cells for 70 hours after the addition of 10 nm selenite. The sequence is that of Thioredoxin reductase SEP1 (SEP1) from Emiliania huxleyi (Coccolithophore).